The sequence spans 71 residues: General transcription and DNA repair factor IIH subunit TFB5 (71 aa).

The protein belongs to the TFB5 family. In terms of assembly, component of the 7-subunit TFIIH core complex composed of XPB, XPD, TFB1/GTF2H1, GTF2H2/P44, TFB4/GTF2H3, TFB2/GTF2H4 and TFB5/GTF2H5, which is active in NER. The core complex associates with the 3-subunit CDK-activating kinase (CAK) module composed of CYCH1/cyclin H1, CDKD and MAT1/At4g30820 to form the 10-subunit holoenzyme (holo-TFIIH) active in transcription.

It localises to the nucleus. Its function is as follows. Component of the general transcription and DNA repair factor IIH (TFIIH) core complex, which is involved in general and transcription-coupled nucleotide excision repair (NER) of damaged DNA and, when complexed to CAK, in RNA transcription by RNA polymerase II. In NER, TFIIH acts by opening DNA around the lesion to allow the excision of the damaged oligonucleotide and its replacement by a new DNA fragment. In transcription, TFIIH has an essential role in transcription initiation. When the pre-initiation complex (PIC) has been established, TFIIH is required for promoter opening and promoter escape. Phosphorylation of the C-terminal tail (CTD) of the largest subunit of RNA polymerase II by the kinase module CAK controls the initiation of transcription. This Arabidopsis thaliana (Mouse-ear cress) protein is General transcription and DNA repair factor IIH subunit TFB5.